A 307-amino-acid polypeptide reads, in one-letter code: MKSYELITILGPTASGKTTFAAALAAQLDTEIISADSRQIYRSMDIGTGKDLADYNVNGKQIPYHLIDICEPGYKYNVFEYQHDFFRVYEDMKRRGKLPILCGGTGMYIEAVLKGYKLLDVPQNPELRESLRNKTLEELETILASYKILHNKTDVDTAQRAIRAIEIEEYYKTQAPDVNEYNPINSLIIGIHIDRELRREKISRRLRTRLDEGMVDEVRTILATGVKPEDLIYYGLEYKFLTLYIIGELSFEEMVSQLEIAIHQFAKRQMTWFRGMERRGCEIHWIDATLPTEEKIATTMRILNNQL.

Residue 11-18 (GPTASGKT) participates in ATP binding. 13–18 (TASGKT) serves as a coordination point for substrate. Interaction with substrate tRNA regions lie at residues 36–39 (DSRQ) and 159–163 (QRAIR).

This sequence belongs to the IPP transferase family. Monomer. It depends on Mg(2+) as a cofactor.

The catalysed reaction is adenosine(37) in tRNA + dimethylallyl diphosphate = N(6)-dimethylallyladenosine(37) in tRNA + diphosphate. Functionally, catalyzes the transfer of a dimethylallyl group onto the adenine at position 37 in tRNAs that read codons beginning with uridine, leading to the formation of N6-(dimethylallyl)adenosine (i(6)A). The protein is tRNA dimethylallyltransferase 1 of Parabacteroides distasonis (strain ATCC 8503 / DSM 20701 / CIP 104284 / JCM 5825 / NCTC 11152).